Reading from the N-terminus, the 1030-residue chain is Zinc finger and SCAN domain-containing protein 20 (1030 aa).

A disordered region spans residues 22–42 (DSWGSDSRPEKESHSPVPGPE). The SCAN box domain maps to 45 to 127 (RRCFRQFRYR…ALVEDWHREA (83 aa)). 4 disordered regions span residues 178-201 (DLSK…PTVP), 213-285 (GKSQ…DSAQ), 411-441 (SGGP…WEPE), and 578-600 (TGLP…GEME). The segment covering 225–240 (AKKEPCQDPAGGDRGD) has biased composition (basic and acidic residues). 2 stretches are compositionally biased toward acidic residues: residues 426 to 441 (SDTE…WEPE) and 589 to 600 (EADDQEAWGEME). A C2H2-type 1; degenerate zinc finger spans residues 697–719 (YGCDTRAKSFSRKVHFFAPQRTH). The segment at 725–747 (YKCLGSGKSFSDRANLSTHQRIH) adopts a C2H2-type 2; degenerate zinc-finger fold. 2 consecutive C2H2-type zinc fingers follow at residues 753-775 (YRCL…QRTH) and 781-803 (YKCG…QRVH). Disordered regions lie at residues 801-820 (RVHL…NFGQ) and 828-850 (WRRN…ADSP). 6 C2H2-type zinc fingers span residues 862–884 (YSCP…QRIH), 890–912 (YECA…RRTH), 918–940 (HKCA…QRVH), 946–968 (YECP…QRIH), 974–996 (YKCR…QRIH), and 1002–1024 (YKCT…RRTH).

Belongs to the krueppel C2H2-type zinc-finger protein family.

The protein localises to the nucleus. Its function is as follows. May be involved in transcriptional regulation. In Mus musculus (Mouse), this protein is Zinc finger and SCAN domain-containing protein 20 (Zscan20).